A 349-amino-acid chain; its full sequence is Hepatic sodium/bile acid cotransporter (349 aa).

Topologically, residues 1-22 (MEAHNASAPFNFTLPPNFGKRP) are extracellular. N-linked (GlcNAc...) asparagine glycosylation is found at Asn5 and Asn11. A helical transmembrane segment spans residues 23 to 44 (TDLALSVILVFMLFFIMLSLGC). Over 45–47 (TME) the chain is Cytoplasmic. The helical transmembrane segment at 48–83 (FSKIKAHLWKPKGLAIALVAQYGIMPLTAFVLGKVF) threads the bilayer. The Extracellular portion of the chain corresponds to 84–86 (RLK). A discontinuously helical membrane pass occupies residues 87–112 (NIEALAILVCGCSPGGNLSNVFSLAM). The Cytoplasmic segment spans residues 113 to 115 (KGD). A helical membrane pass occupies residues 116 to 142 (MNLSIVMTTCSTFCALGMMPLLLYIYS). Topologically, residues 143–156 (RGIYDGDLKDKVPY) are extracellular. Residues 157 to 179 (KGIVISLVLVLIPCTIGIVLKSK) form a helical membrane-spanning segment. The Cytoplasmic portion of the chain corresponds to 180–183 (RPQY). Residues 184–217 (MRYVIKGGMIIILLCSVAVTVLSAINVGKSIMFA) traverse the membrane as a helical segment. The Extracellular segment spans residues 218–219 (MT). The helical transmembrane segment at 220-243 (PLLIATSSLMPFIGFLLGYVLSAL) threads the bilayer. Residues 244 to 247 (FCLN) are Cytoplasmic-facing. The chain crosses the membrane as a discontinuously helical span at residues 248-273 (GRCRRTVSMETGCQNVQLCSTILNVA). At 274 to 280 (FPPEVIG) the chain is on the extracellular side. A helical transmembrane segment spans residues 281–311 (PLFFFPLLYMIFQLGEGLLLIAIFWCYEKFK). The Cytoplasmic segment spans residues 312 to 349 (TPKDKTKMIYTAATTEETIPGALGNGTYKGEDCSPCTA).

The protein belongs to the bile acid:sodium symporter (BASS) (TC 2.A.28) family. In terms of assembly, (Microbial infection) Interacts with the myristoylated pre-S1 domain of hepatitis B virus large envelope protein; myristoylation is essential for this interaction. In terms of tissue distribution, expressed in liver. Expressed in placental trophoblasts.

Its subcellular location is the cell membrane. It catalyses the reaction taurocholate(out) + 2 Na(+)(out) = taurocholate(in) + 2 Na(+)(in). It carries out the reaction cholate(out) + 2 Na(+)(out) = cholate(in) + 2 Na(+)(in). The enzyme catalyses estrone 3-sulfate(out) + 2 Na(+)(out) = estrone 3-sulfate(in) + 2 Na(+)(in). The catalysed reaction is taurochenodeoxycholate(out) + 2 Na(+)(out) = taurochenodeoxycholate(in) + 2 Na(+)(in). It catalyses the reaction tauroursodeoxycholate(out) + 2 Na(+)(out) = tauroursodeoxycholate(in) + 2 Na(+)(in). It carries out the reaction glycocholate(out) + 2 Na(+)(out) = glycocholate(in) + 2 Na(+)(in). The enzyme catalyses tauronorcholate(out) + 2 Na(+)(out) = tauronorcholate(in) + 2 Na(+)(in). The catalysed reaction is taurodeoxycholate(out) + 2 Na(+)(out) = taurodeoxycholate(in) + 2 Na(+)(in). It catalyses the reaction tauroallocholate(out) + 2 Na(+)(out) = tauroallocholate(in) + 2 Na(+)(in). It carries out the reaction taurohyodeoxycholate(out) + 2 Na(+)(out) = taurohyodeoxycholate(in) + 2 Na(+)(in). The enzyme catalyses taurohyocholate(out) + 2 Na(+)(out) = taurohyocholate(in) + 2 Na(+)(in). The catalysed reaction is tauro-beta-muricholate(out) + 2 Na(+)(out) = tauro-beta-muricholate(in) + 2 Na(+)(in). The transport of bile acids is sodium-dependent. In terms of biological role, as a major transporter of conjugated bile salts from plasma into the hepatocyte, it plays a key role in the enterohepatic circulation of bile salts necessary for the solubilization and absorption of dietary fat and fat-soluble vitamins. It is strictly dependent on the extracellular presence of sodium. It exhibits broad substrate specificity and transports various bile acids, such as taurocholate, cholate, as well as non-bile acid organic compounds, such as estrone sulfate. Works collaboratively with the ileal transporter (NTCP2), the organic solute transporter (OST), and the bile salt export pump (BSEP), to ensure efficacious biological recycling of bile acids during enterohepatic circulation. Functionally, (Microbial infection) Acts as an entry receptor for hepatitis B virus (HBV). The recognition for human SLC10A1/NTCP is highly specific. In Homo sapiens (Human), this protein is Hepatic sodium/bile acid cotransporter (SLC10A1).